Here is a 408-residue protein sequence, read N- to C-terminus: Peptidase T (408 aa).

Histidine 78 serves as a coordination point for Zn(2+). The active site involves aspartate 80. Aspartate 140 lines the Zn(2+) pocket. Glutamate 173 acts as the Proton acceptor in catalysis. Zn(2+)-binding residues include glutamate 174, aspartate 196, and histidine 379.

The protein belongs to the peptidase M20B family. It depends on Zn(2+) as a cofactor.

Its subcellular location is the cytoplasm. It carries out the reaction Release of the N-terminal residue from a tripeptide.. In terms of biological role, cleaves the N-terminal amino acid of tripeptides. The protein is Peptidase T of Escherichia coli O6:K15:H31 (strain 536 / UPEC).